The primary structure comprises 184 residues: Glutathione-regulated potassium-efflux system ancillary protein KefG (184 aa).

Belongs to the NAD(P)H dehydrogenase (quinone) family. KefG subfamily. Interacts with KefB.

It is found in the cell inner membrane. It catalyses the reaction a quinone + NADH + H(+) = a quinol + NAD(+). It carries out the reaction a quinone + NADPH + H(+) = a quinol + NADP(+). Functionally, regulatory subunit of a potassium efflux system that confers protection against electrophiles. Required for full activity of KefB. The polypeptide is Glutathione-regulated potassium-efflux system ancillary protein KefG (Cronobacter sakazakii (strain ATCC BAA-894) (Enterobacter sakazakii)).